The sequence spans 152 residues: Superoxide dismutase [Cu-Zn] (152 aa).

The Cu cation site is built by His-45, His-47, and His-62. A disulfide bond links Cys-56 and Cys-145. Zn(2+)-binding residues include His-62, His-70, His-79, and Asp-82. His-119 serves as a coordination point for Cu cation.

The protein belongs to the Cu-Zn superoxide dismutase family. As to quaternary structure, homodimer. Cu cation is required as a cofactor. The cofactor is Zn(2+).

It localises to the cytoplasm. The enzyme catalyses 2 superoxide + 2 H(+) = H2O2 + O2. Destroys radicals which are normally produced within the cells and which are toxic to biological systems. This is Superoxide dismutase [Cu-Zn] (SODCC) from Capsicum annuum (Capsicum pepper).